Consider the following 104-residue polypeptide: Large ribosomal subunit protein uL24 (104 aa).

The protein belongs to the universal ribosomal protein uL24 family. Part of the 50S ribosomal subunit.

In terms of biological role, one of two assembly initiator proteins, it binds directly to the 5'-end of the 23S rRNA, where it nucleates assembly of the 50S subunit. One of the proteins that surrounds the polypeptide exit tunnel on the outside of the subunit. The protein is Large ribosomal subunit protein uL24 of Buchnera aphidicola subsp. Baizongia pistaciae (strain Bp).